The following is a 1382-amino-acid chain: Histone-lysine N-methyltransferase SUVR5 (1382 aa).

2 disordered regions span residues 43–62 (TVTG…SEPK) and 354–373 (GNTN…NTPE). 3 C2H2-type zinc fingers span residues 735-758 (FACA…EERH), 769-792 (LQCI…QAVH), and 838-861 (FVCK…QAEH). The tract at residues 915-935 (RRMQGSKSLGTEGNTEAGVSP) is disordered. Over residues 919 to 928 (GSKSLGTEGN) the composition is skewed to polar residues. Residues 1145–1221 (LRCSCRSSVC…TCQNRVLQNG (77 aa)) form the Pre-SET domain. Zn(2+) is bound by residues Cys1147, Cys1149, Cys1154, Cys1159, Cys1182, Cys1203, Cys1207, Cys1209, and Cys1213. Residues 1224 to 1356 (AKLEVFRTES…AGEEITRDYG (133 aa)) form the SET domain. Residues 1234–1236 (KGW), Tyr1277, and 1313–1314 (NH) contribute to the S-adenosyl-L-methionine site. Residue Cys1316 coordinates Zn(2+). Tyr1355 serves as a coordination point for S-adenosyl-L-methionine. In terms of domain architecture, Post-SET spans 1366–1382 (NEHPCHCKATNCRGLLS). 3 residues coordinate Zn(2+): Cys1370, Cys1372, and Cys1377.

Belongs to the class V-like SAM-binding methyltransferase superfamily. In terms of assembly, component of a regulatory complex with LDL1/SWP1. Interacts with LDL1/SWP1.

It localises to the nucleus. Its subcellular location is the chromosome. The enzyme catalyses L-lysyl-[histone] + S-adenosyl-L-methionine = N(6)-methyl-L-lysyl-[histone] + S-adenosyl-L-homocysteine + H(+). Functionally, histone methyltransferase that functions together with its binding partner LDL1/SWP1 as one of the regulators of flower timing in Arabidopsis. Mediates H3K9me2 deposition and regulates gene expression in a DNA methylation-independent manner. Binds DNA through its zinc fingers and represses the expression of a subset of stimulus response genes. May represent a novel mechanism for plants to regulate their chromatin and transcriptional state, which may allow for the adaptability and modulation necessary to rapidly respond to environment or developmental cues. The chain is Histone-lysine N-methyltransferase SUVR5 from Arabidopsis thaliana (Mouse-ear cress).